The sequence spans 525 residues: MDMPEDQAGGPTAKMYLWDQAEDRSLGTLLSLEEQILNSTFEACDPQRTGTVAVTHLLAYLEAVTGRGPQDARLQTLACSLDPSGEGPQATVDLDTFLVVMRDWITACQLDGGLELEEETAFEGALTSQQLPSGCPEVEDPANLESFGGEDPRPELPATADLLSSLEDLELSNRRLAGENAKLQRSVETAEEGSARLGEEISALRKQLRSTQQALQLARGVDEELEDLKTLAKSLEEQNRSLLAQARHTEKEQQRLVAEMETLQEENGKLLAERDGVKRRSEELASEKDILKRQLYECEHLICQRDAILSERTRHAESLTKTLEEYRATTQELRLEISHLEEQLSQTQEGLDELSEGAQVRRVDCTNLLPPSLGVELQAIQQRNLQEESAHPQEGREEPSTRLPRREEEDGAEIQVMVDLPLHPEDSHPGDILGNPPESSPSEPELQQALVPMVKELVPVRRPVWGQLCLWPLHLRRLRVTRHLLIPAPLLGLLLLLLLSVLLLGQSPPPTWPHLQLCYLQPPPV.

Topologically, residues 1 to 483 (MDMPEDQAGG…HLRRLRVTRH (483 aa)) are cytoplasmic. A disordered region spans residues 127–156 (TSQQLPSGCPEVEDPANLESFGGEDPRPEL). Residues 164–360 (SSLEDLELSN…LDELSEGAQV (197 aa)) adopt a coiled-coil conformation. Disordered regions lie at residues 384-409 (NLQE…REEE) and 423-444 (HPED…PSEP). Positions 385-408 (LQEESAHPQEGREEPSTRLPRREE) are enriched in basic and acidic residues. A helical; Anchor for type IV membrane protein membrane pass occupies residues 484 to 504 (LLIPAPLLGLLLLLLLSVLLL). Residues 505-525 (GQSPPPTWPHLQLCYLQPPPV) are Perinuclear space-facing.

As to quaternary structure, core component the LINC complex which is composed of inner nuclear membrane SUN domain-containing proteins coupled to outer nuclear membrane KASH domain-containing nesprins. SUN and KASH domain-containing proteins seem to bind each other promiscuously; however, differentially expression of LINC complex constituents is giving rise to specific assemblies. At least SUN1/2-containing core LINC complexes are proposed to be hexameric composed of three protomers of each KASH and SUN domain-containing protein. Interacts with SUN1; this interaction mediates its telomere localization by forming a SUN1:KASH5 LINC complex. Component of a probable SUN2:KASH5 LINC complex. Self-associates. Interacts with DYNC1H1, DCTN1, DYNC1I1/2 and PAFAH1B1; suggesting the association with the dynein-dynactin motor complex.

Its subcellular location is the nucleus outer membrane. The protein localises to the nucleus. It is found in the chromosome. It localises to the telomere. The protein resides in the nucleus envelope. As a component of the LINC (LInker of Nucleoskeleton and Cytoskeleton) complex, involved in the connection between the nuclear lamina and the cytoskeleton. The nucleocytoplasmic interactions established by the LINC complex play an important role in the transmission of mechanical forces across the nuclear envelope and in nuclear movement and positioning. Required for telomere attachment to nuclear envelope in the prophase of meiosis and for rapid telomere prophase movements implicating a SUN1/2:KASH5 LINC complex in which SUN1 and SUN2 seem to act at least partial redundantly. Required for homolog pairing during meiotic prophase in spermatocytes and probably oocytes. Essential for male and female gametogenesis. Recruits cytoplasmic dynein to telomere attachment sites at the nuclear envelope in spermatocytes. In oocytes is involved in meiotic resumption and spindle formation. The sequence is that of Protein KASH5 (KASH5) from Bos taurus (Bovine).